Reading from the N-terminus, the 908-residue chain is Glutamate receptor ionotropic, kainate 2 (908 aa).

The N-terminal stretch at 1–31 (MKIISPVLSNLVFSRSIKVLLCLLWIGYSQG) is a signal peptide. Over 32–561 (TTHVLRFGGI…VFSFLNPLSP (530 aa)) the chain is Extracellular. N-linked (GlcNAc...) asparagine glycans are attached at residues Asn-67, Asn-73, Asn-275, Asn-378, Asn-412, Asn-423, and Asn-430. Residues Cys-96 and Cys-347 are joined by a disulfide bond. L-glutamate-binding residues include Pro-516, Ala-518, and Arg-523. Asn-546 is a glycosylation site (N-linked (GlcNAc...) asparagine). The chain crosses the membrane as a helical span at residues 562 to 582 (DIWMYILLAYLGVSCVLFVIA). The Cytoplasmic portion of the chain corresponds to 583–638 (RFSPYEWYNPHPCNPDSDVVENNFTLLNSFWFGVGALMQQGSELMPKALSTRIVGG). A helical membrane pass occupies residues 639–659 (IWWFFTLIIISSYTANLAAFL). Over 660 to 819 (TVERMESPID…KEASALGVQN (160 aa)) the chain is Extracellular. Residues Ala-689, Thr-690, and Glu-738 each contribute to the L-glutamate site. Cys-750 and Cys-804 form a disulfide bridge. A glycan (N-linked (GlcNAc...) asparagine) is linked at Asn-751. Residues 820-840 (IGGIFIVLAAGLVLSVFVAVG) form a helical membrane-spanning segment. Residues 841-908 (EFLYKSKKNA…RRLPGKETMA (68 aa)) are Cytoplasmic-facing. 2 positions are modified to phosphoserine; by PKC: Ser-846 and Ser-868. Residue Lys-886 forms a Glycyl lysine isopeptide (Lys-Gly) (interchain with G-Cter in SUMO1) linkage.

It belongs to the glutamate-gated ion channel (TC 1.A.10.1) family. GRIK2 subfamily. Homotetramer and heterotetramer with GRIK5. Tetramers may be formed by the dimerization of dimers. Assembles into a kainate-gated homomeric channel that does not bind AMPA. Can form functional heteromeric receptors with GRIK4 and GRIK5. Can form functional heteromeric receptors with GRIK3. Interacts with DLG4. Interacts with NETO2. Interacts (via C-terminus) with KLHL17 (via kelch repeats); the interaction targets GRIK2 for degradation via ubiquitin-proteasome pathway. In terms of processing, sumoylation mediates kainate receptor-mediated endocytosis and regulates synaptic transmission. Sumoylation is enhanced by PIAS3 and desumoylated by SENP1. Post-translationally, ubiquitinated. Ubiquitination regulates the GRIK2 levels at the synapse by leading kainate receptor degradation through proteasome. Phosphorylated by PKC at Ser-868 upon agonist activation, this directly enhance sumoylation. As to expression, highest expression is found in the olfactory lobe, piriform cortex, dentate gyrus, hippocampus, granular cell layer of the cerebellum, and in caudate-putamen.

Its subcellular location is the cell membrane. It is found in the postsynaptic cell membrane. The enzyme catalyses Ca(2+)(in) = Ca(2+)(out). It carries out the reaction Na(+)(in) = Na(+)(out). Its activity is regulated as follows. Cold receptor activity activated by temperatures between 10-19 degrees Celsius. In terms of biological role, ionotropic glutamate receptor that functions as a cation-permeable ligand-gated ion channel, gated by L-glutamate and the glutamatergic agonist kainic acid. L-glutamate acts as an excitatory neurotransmitter at many synapses in the central nervous system. Binding of the excitatory neurotransmitter L-glutamate induces a conformation change, leading to the opening of the cation channel, and thereby converts the chemical signal to an electrical impulse. The receptor then desensitizes rapidly and enters a transient inactive state, characterized by the presence of bound agonist. Modulates cell surface expression of NETO2. In association with GRIK3, involved in presynaptic facilitation of glutamate release at hippocampal mossy fiber synapses. Its function is as follows. Independent of its ionotropic glutamate receptor activity, acts as a thermoreceptor conferring sensitivity to cold temperatures. Functions in dorsal root ganglion neurons. This is Glutamate receptor ionotropic, kainate 2 (Grik2) from Rattus norvegicus (Rat).